Here is a 190-residue protein sequence, read N- to C-terminus: MTLSSQHYLVITALGADRPGIVNTITRHVSSCGCNIEDSRLAMLGEEFTFIMLLSGSWNAITLIESTLPLKGAELDLLIVMKRTTARPRPPMPASVWVQVDVADSPHLIERFTALFDAHHMNIAELVSRTQPAENERAAQLHIQITAHSPASADAANIEQAFKALCTELNAQGSINVVNYSQHDEQDGVK.

2 ACT domains span residues 10–91 and 97–176; these read VITA…PRPP and WVQV…GSIN.

The protein localises to the cytoplasm. Functionally, negative transcriptional regulator of the glycine cleavage system operon (GCV). Does not autoregulate its own expression. It is not yet known how GcvR acts as a repressor. It does not seem to bind DNA. It could interact with GcvA and suppress its activatory activity. This chain is Glycine cleavage system transcriptional repressor (gcvR), found in Escherichia coli (strain K12).